The primary structure comprises 483 residues: Regulatory protein ViaA (483 aa).

It belongs to the ViaA family. Homodimer. Interacts with RavA.

The protein resides in the cytoplasm. Its function is as follows. Component of the RavA-ViaA chaperone complex, which may act on the membrane to optimize the function of some of the respiratory chains. ViaA stimulates the ATPase activity of RavA. This Escherichia coli O139:H28 (strain E24377A / ETEC) protein is Regulatory protein ViaA.